An 86-amino-acid polypeptide reads, in one-letter code: Small ribosomal subunit protein uS17 (86 aa).

Belongs to the universal ribosomal protein uS17 family. As to quaternary structure, part of the 30S ribosomal subunit.

Functionally, one of the primary rRNA binding proteins, it binds specifically to the 5'-end of 16S ribosomal RNA. This chain is Small ribosomal subunit protein uS17, found in Nitrosococcus oceani (strain ATCC 19707 / BCRC 17464 / JCM 30415 / NCIMB 11848 / C-107).